The primary structure comprises 276 residues: NAD kinase (276 aa).

Aspartate 67 serves as the catalytic Proton acceptor. NAD(+) is bound by residues aspartate 67–glycine 68, arginine 72, asparagine 136–aspartate 137, lysine 147, arginine 164, aspartate 166, threonine 177–serine 182, alanine 201, and glutamine 235.

Belongs to the NAD kinase family. The cofactor is a divalent metal cation.

It is found in the cytoplasm. It carries out the reaction NAD(+) + ATP = ADP + NADP(+) + H(+). Functionally, involved in the regulation of the intracellular balance of NAD and NADP, and is a key enzyme in the biosynthesis of NADP. Catalyzes specifically the phosphorylation on 2'-hydroxyl of the adenosine moiety of NAD to yield NADP. The sequence is that of NAD kinase from Thermococcus sibiricus (strain DSM 12597 / MM 739).